Consider the following 736-residue polypeptide: Neprilysin-2 (736 aa).

At 1 to 19 (MRPDEEDGTTKSPGSRWTR) the chain is on the cytoplasmic side. Residues 20 to 40 (IWAIIALILLILFLLVLGAAI) traverse the membrane as a helical; Signal-anchor for type II membrane protein segment. The Extracellular portion of the chain corresponds to 41–736 (YFYINYKDSS…MNPREKCRVW (696 aa)). The 685-residue stretch at 52-736 (VCLSPGCIKT…MNPREKCRVW (685 aa)) folds into the Peptidase M13 domain. Intrachain disulfides connect Cys53–Cys58, Cys76–Cys721, Cys84–Cys681, Cys142–Cys399, and Cys608–Cys733. Positions 103–123 (FENLGQDLEFALKELLDENDE) form a coiled coil. Residue His571 participates in Zn(2+) binding. Residue Glu572 is part of the active site. Zn(2+) contacts are provided by His575 and Glu633. The Proton donor role is filled by Asp637.

Belongs to the peptidase M13 family. Zn(2+) is required as a cofactor. As to expression, expressed in muscle cells, GLR cells, SMB motor neurons and AIM interneurons.

The protein resides in the membrane. In terms of biological role, required for olfactory plasticity, which is the change from positive chemotaxis to dispersal after prolonged exposure to an odorant. Thought to antagonise snet-1 by degrading excess snet-1 peptides and thus enabling olfactory plasticity. This is Neprilysin-2 from Caenorhabditis elegans.